The following is a 178-amino-acid chain: Protein GrpE (178 aa).

It belongs to the GrpE family. Homodimer.

It localises to the cytoplasm. Its function is as follows. Participates actively in the response to hyperosmotic and heat shock by preventing the aggregation of stress-denatured proteins, in association with DnaK and GrpE. It is the nucleotide exchange factor for DnaK and may function as a thermosensor. Unfolded proteins bind initially to DnaJ; upon interaction with the DnaJ-bound protein, DnaK hydrolyzes its bound ATP, resulting in the formation of a stable complex. GrpE releases ADP from DnaK; ATP binding to DnaK triggers the release of the substrate protein, thus completing the reaction cycle. Several rounds of ATP-dependent interactions between DnaJ, DnaK and GrpE are required for fully efficient folding. This is Protein GrpE from Rickettsia prowazekii (strain Madrid E).